We begin with the raw amino-acid sequence, 63 residues long: SPbeta prophage-derived uncharacterized protein YomP (63 aa).

The sequence is that of SPbeta prophage-derived uncharacterized protein YomP (yomP) from Bacillus subtilis (strain 168).